The following is a 312-amino-acid chain: uncharacterized protein (312 aa).

The interval 95–119 (EKRRENPPKLTLPPLPPPAEERKKP) is disordered.

Its subcellular location is the plastid. The protein localises to the chloroplast. This is an uncharacterized protein from Chlamydomonas moewusii (Chlamydomonas eugametos).